The following is a 217-amino-acid chain: Ras-related protein Rab-19 (217 aa).

Residues Ser-26, Val-28, Gly-29, Lys-30, Thr-31, Cys-32, Tyr-42, Thr-43, Glu-44, Thr-45, and Thr-49 each contribute to the GTP site. Thr-31 serves as a coordination point for Mg(2+). The Switch 1 signature appears at 39–54 (SGVYTETQQNTIGVDF). Mg(2+)-binding residues include Thr-49 and Asp-72. Residues 74–89 (AGQERFRTITQSYYRS) carry the Switch 2 motif. GTP is bound by residues Gly-75, Asn-130, Lys-131, Asp-133, Ser-161, Ala-162, and Lys-163. 2 S-geranylgeranyl cysteine lipidation sites follow: Cys-215 and Cys-217. Cys-217 is modified (cysteine methyl ester).

The protein belongs to the small GTPase superfamily. Rab family. The cofactor is Mg(2+).

The protein localises to the cell membrane. It carries out the reaction GTP + H2O = GDP + phosphate + H(+). With respect to regulation, regulated by guanine nucleotide exchange factors (GEFs) which promote the exchange of bound GDP for free GTP. Regulated by GTPase activating proteins (GAPs) which increase the GTP hydrolysis activity. Inhibited by GDP dissociation inhibitors (GDIs). Functionally, the small GTPases Rab are key regulators of intracellular membrane trafficking, from the formation of transport vesicles to their fusion with membranes. Rabs cycle between an inactive GDP-bound form and an active GTP-bound form that is able to recruit to membranes different set of downstream effectors directly responsible for vesicle formation, movement, tethering and fusion. This is Ras-related protein Rab-19 from Homo sapiens (Human).